The primary structure comprises 299 residues: MKIQAGQLGLDDNDVPGPLPDTDSKPSSQSQNDTPMFKLGNFESPVLKELSRRTVNKEMETQRIMTNVIAFAFWNLLVKFIKFFWNNTHVGRQFCNRLSRIHLYMLTFHTLKKANIIYHTTFSWLNAELLDYLFHLLISLNILFSLWKLLSTVKVSDLNLTDRQKKLLGVDMQSSVDTGLQPQHPHYVSTSKISQMAQNKTHIPQTNLKNHPAYLFKGLETPLKARQREMAEEQTKLQSQSLHTKNVFGTLQRHSGISSTLVSANNDNNSPHTPVTRKGYIPSSKYAYMMNSQSPRGKI.

Residues 1-39 are disordered; it reads MKIQAGQLGLDDNDVPGPLPDTDSKPSSQSQNDTPMFKL. Positions 25–34 are enriched in polar residues; that stretch reads KPSSQSQNDT. The next 2 membrane-spanning stretches (helical) occupy residues 64-84 and 133-153; these read IMTN…IKFF and LFHL…LSTV. Ser270 carries the post-translational modification Phosphoserine. Thr273 carries the post-translational modification Phosphothreonine. Phosphoserine is present on residues Ser292 and Ser294.

As to quaternary structure, component of the nuclear pore complex (NPC). NPC constitutes the exclusive means of nucleocytoplasmic transport. NPCs allow the passive diffusion of ions and small molecules and the active, nuclear transport receptor-mediated bidirectional transport of macromolecules such as proteins, RNAs, ribonucleoparticles (RNPs), and ribosomal subunits across the nuclear envelope. Due to its 8-fold rotational symmetry, all subunits are present with 8 copies or multiples thereof.

Its subcellular location is the nucleus. It is found in the nuclear pore complex. The protein resides in the nucleus membrane. Functionally, functions as a component of the nuclear pore complex (NPC). NPC components, collectively referred to as nucleoporins (NUPs), can play the role of both NPC structural components and of docking or interaction partners for transiently associated nuclear transport factors. In Saccharomyces cerevisiae (strain ATCC 204508 / S288c) (Baker's yeast), this protein is Nucleoporin POM34 (POM34).